Here is a 253-residue protein sequence, read N- to C-terminus: Mediator of RNA polymerase II transcription subunit 10 (253 aa).

Disordered regions lie at residues 32–63, 88–109, and 206–253; these read YDTN…HASS, LPSS…TELE, and VEAT…QSGQ. A compositionally biased stretch (low complexity) spans 34 to 47; that stretch reads TNPSSSNNNTPTSS. The span at 50–60 shows a compositional bias: gly residues; that stretch reads SGGGGGGGGGH. Residues 88–104 are compositionally biased toward low complexity; sequence LPSSPSSGPSNNQPQQG. Residues 231 to 253 show a composition bias toward gly residues; it reads SAGGEGQQGQGQGQQGQGQQSGQ.

Belongs to the Mediator complex subunit 10 family. In terms of assembly, component of the Mediator complex.

The protein localises to the nucleus. Functionally, component of the Mediator complex, a coactivator involved in the regulated transcription of nearly all RNA polymerase II-dependent genes. Mediator functions as a bridge to convey information from gene-specific regulatory proteins to the basal RNA polymerase II transcription machinery. Mediator is recruited to promoters by direct interactions with regulatory proteins and serves as a scaffold for the assembly of a functional preinitiation complex with RNA polymerase II and the general transcription factors. In Neurospora crassa (strain ATCC 24698 / 74-OR23-1A / CBS 708.71 / DSM 1257 / FGSC 987), this protein is Mediator of RNA polymerase II transcription subunit 10 (nut2).